The chain runs to 284 residues: Bifunctional protein FolD (284 aa).

NADP(+)-binding positions include 165-167 (GRS) and Ser-190.

Belongs to the tetrahydrofolate dehydrogenase/cyclohydrolase family. In terms of assembly, homodimer.

It catalyses the reaction (6R)-5,10-methylene-5,6,7,8-tetrahydrofolate + NADP(+) = (6R)-5,10-methenyltetrahydrofolate + NADPH. It carries out the reaction (6R)-5,10-methenyltetrahydrofolate + H2O = (6R)-10-formyltetrahydrofolate + H(+). It functions in the pathway one-carbon metabolism; tetrahydrofolate interconversion. Functionally, catalyzes the oxidation of 5,10-methylenetetrahydrofolate to 5,10-methenyltetrahydrofolate and then the hydrolysis of 5,10-methenyltetrahydrofolate to 10-formyltetrahydrofolate. The protein is Bifunctional protein FolD of Streptococcus equi subsp. zooepidemicus (strain MGCS10565).